The sequence spans 439 residues: MIGSPVKPLFVFVLTFSLLLVVILLSPSPHILQIPFPSGSSVGSSDIWSVKRIMEWRPCKWWLQGHLTPLPAKTNGYIRVDCYGGLNQMRRDLCDGVGIARLLNATLVLPKFEVAAYWNESSGFADVFDVDYFIQKMSGYIEVVKELPKDIASKEPFKVDCSKRKGQFDYIESVLPLLLEHHYISFTPAMSQRRDRYPEYARATLCQACYSAIHLTSSLEKKAVELFDAIPKPFLSLHLRFEPDMVAYSQCEYPNLSPSSIAAIEAARADRKPWTGELAQTWRKRGKCPLTPNETVLMLQSLNIPTSTNIYLAAGDGLMEMEGFTSVYTNVFTKSVLLNQEDFTRMHGNTKAALDYHVSINSDAYVATYFGNMDKIVAAMRTYKQMHNTLFLSRKAFAELTSQGLEGAELKKALWEVHKSDFAIGRGFALPDCFCEFEL.

The helical; Signal-anchor for type II membrane protein transmembrane segment at Pro-8–Ser-28 threads the bilayer. Asn-104 and Asn-119 each carry an N-linked (GlcNAc...) asparagine glycan. A substrate-binding site is contributed by His-238–Arg-240. An N-linked (GlcNAc...) asparagine glycan is attached at Asn-293.

The protein belongs to the glycosyltransferase GT106 family.

The protein resides in the membrane. It functions in the pathway glycan metabolism. This is O-fucosyltransferase 13 from Arabidopsis thaliana (Mouse-ear cress).